Reading from the N-terminus, the 552-residue chain is Urocanate hydratase (552 aa).

Residues 50–51, Gln-128, 174–176, Glu-194, Arg-199, 261–265, 271–272, and Tyr-320 contribute to the NAD(+) site; these read GG, GMG, QTSAH, and YI. Cys-408 is an active-site residue. Residue Gly-490 participates in NAD(+) binding.

Belongs to the urocanase family. Requires NAD(+) as cofactor.

It is found in the cytoplasm. The catalysed reaction is 4-imidazolone-5-propanoate = trans-urocanate + H2O. Its pathway is amino-acid degradation; L-histidine degradation into L-glutamate; N-formimidoyl-L-glutamate from L-histidine: step 2/3. Its function is as follows. Catalyzes the conversion of urocanate to 4-imidazolone-5-propionate. This chain is Urocanate hydratase, found in Bdellovibrio bacteriovorus (strain ATCC 15356 / DSM 50701 / NCIMB 9529 / HD100).